The chain runs to 478 residues: NADH-quinone oxidoreductase subunit N (478 aa).

Helical transmembrane passes span 8 to 28 (LVLP…FGVW), 38 to 58 (ILWA…LGTG), 62 to 82 (AFGG…VILV), 106 to 126 (PILI…GDLM), 160 to 180 (FVLG…VYGF), 200 to 220 (IGLL…VSAV), 234 to 254 (PTPV…ALIA), 268 to 288 (WGQI…IAGI), 300 to 320 (SSIS…AAGV), 322 to 342 (SMLL…AFIL), 368 to 388 (AFAL…LGFF), 398 to 418 (IGAG…IGAF), and 445 to 465 (FAFL…MAGV).

It belongs to the complex I subunit 2 family. As to quaternary structure, NDH-1 is composed of 14 different subunits. Subunits NuoA, H, J, K, L, M, N constitute the membrane sector of the complex.

The protein localises to the cellular chromatophore membrane. The catalysed reaction is a quinone + NADH + 5 H(+)(in) = a quinol + NAD(+) + 4 H(+)(out). Functionally, NDH-1 shuttles electrons from NADH, via FMN and iron-sulfur (Fe-S) centers, to quinones in the respiratory chain. The immediate electron acceptor for the enzyme in this species is believed to be ubiquinone. Couples the redox reaction to proton translocation (for every two electrons transferred, four hydrogen ions are translocated across the cytoplasmic membrane), and thus conserves the redox energy in a proton gradient. In Rhodobacter capsulatus (Rhodopseudomonas capsulata), this protein is NADH-quinone oxidoreductase subunit N.